A 497-amino-acid chain; its full sequence is Probable malate:quinone oxidoreductase (497 aa).

Belongs to the MQO family. The cofactor is FAD.

The enzyme catalyses (S)-malate + a quinone = a quinol + oxaloacetate. The protein operates within carbohydrate metabolism; tricarboxylic acid cycle; oxaloacetate from (S)-malate (quinone route): step 1/1. The chain is Probable malate:quinone oxidoreductase from Rhodopseudomonas palustris (strain TIE-1).